The chain runs to 658 residues: UvrABC system protein B (658 aa).

The region spanning 25-416 (KSLKNNNHYQ…QKNVAEQIIR (392 aa)) is the Helicase ATP-binding domain. 38-45 (GVTGSGKT) provides a ligand contact to ATP. The short motif at 91–114 (HFDYYQPESYIPRRDLFIEKDSSI) is the Beta-hairpin element. A Helicase C-terminal domain is found at 433–607 (QVQDLFDEIK…ELKLRDDEIK (175 aa)). The UVR domain occupies 623 to 658 (EKIIKELDKKMRERAKNLDFEEAMRLRDEIAQLRTL).

The protein belongs to the UvrB family. In terms of assembly, forms a heterotetramer with UvrA during the search for lesions. Interacts with UvrC in an incision complex.

The protein localises to the cytoplasm. The UvrABC repair system catalyzes the recognition and processing of DNA lesions. A damage recognition complex composed of 2 UvrA and 2 UvrB subunits scans DNA for abnormalities. Upon binding of the UvrA(2)B(2) complex to a putative damaged site, the DNA wraps around one UvrB monomer. DNA wrap is dependent on ATP binding by UvrB and probably causes local melting of the DNA helix, facilitating insertion of UvrB beta-hairpin between the DNA strands. Then UvrB probes one DNA strand for the presence of a lesion. If a lesion is found the UvrA subunits dissociate and the UvrB-DNA preincision complex is formed. This complex is subsequently bound by UvrC and the second UvrB is released. If no lesion is found, the DNA wraps around the other UvrB subunit that will check the other stand for damage. The chain is UvrABC system protein B from Helicobacter pylori (strain J99 / ATCC 700824) (Campylobacter pylori J99).